The sequence spans 261 residues: Kallikrein 1-related peptidase b8 (261 aa).

An N-terminal signal peptide occupies residues 1-18 (MRFLILFLALSLGGIDAA). Residues 19-24 (PPLQSR) constitute a propeptide, activation peptide. The Peptidase S1 domain maps to 25–258 (VVGGFNCEKN…FNSWIKDTMT (234 aa)). 5 cysteine pairs are disulfide-bonded: C31–C173, C50–C66, C152–C219, C184–C198, and C209–C234. H65 acts as the Charge relay system in catalysis. Residue N102 is glycosylated (N-linked (GlcNAc...) asparagine). Catalysis depends on D120, which acts as the Charge relay system. The active-site Charge relay system is S213.

This sequence belongs to the peptidase S1 family. Kallikrein subfamily.

It catalyses the reaction Preferential cleavage of Arg-|-Xaa bonds in small molecule substrates. Highly selective action to release kallidin (lysyl-bradykinin) from kininogen involves hydrolysis of Met-|-Xaa or Leu-|-Xaa.. In terms of biological role, glandular kallikreins cleave Met-Lys and Arg-Ser bonds in kininogen to release Lys-bradykinin. In Mus musculus (Mouse), this protein is Kallikrein 1-related peptidase b8 (Klk1b8).